Here is a 545-residue protein sequence, read N- to C-terminus: DNA-binding protein REPIN1 (545 aa).

A disordered region spans residues 1–50 (MLEQRCRGPTAMGPAQPWLFSGPSQESSQPDRGLRYQGKSAQPRGQTPGK). Phosphoserine is present on S27. K39 carries the post-translational modification N6-acetyllysine. Residues 52-74 (HRCAHCRKRFPGWVALWLHARRC) form a C2H2-type 1; atypical zinc finger. C2H2-type zinc fingers lie at residues 80-102 (LPCH…LQVH) and 111-133 (FICH…LRAH). The segment at 140 to 162 (ITCPECDRRFWRQKQLRAHLRRC) adopts a C2H2-type 4; atypical zinc-finger fold. 11 consecutive C2H2-type zinc fingers follow at residues 172-194 (FICG…KRVH), 229-251 (FQCA…RRVH), 257-279 (HQCP…RRIH), 285-307 (YPCT…SKIH), 353-375 (HSCS…QRQH), 381-403 (FACT…SRVH), 409-431 (FACE…RRDH), 437-459 (FVCP…RRIH), 465-487 (YVCP…RRIH), 493-515 (YACP…RKSH), and 521-543 (FCCA…QKKH). K269 carries the N6-acetyllysine modification.

As to quaternary structure, homodimers and homomultimers. Found in a complex with RIP60 and RIP100.

It localises to the nucleus. Its subcellular location is the cytoplasm. The protein resides in the cytosol. In terms of biological role, sequence-specific double-stranded DNA-binding protein. Binds ATT-rich and T-rich DNA sequences and facilitates DNA bending. May regulate the expression of genes involved in cellular fatty acid import, including SCARB1/CD36, and genes involved in lipid droplet formation. May regulate the expression of LCN2, and thereby influence iron metabolism and apoptosis-related pathways. May regulate the expression of genes involved in glucose transport. The chain is DNA-binding protein REPIN1 (Repin1) from Mus musculus (Mouse).